Here is a 311-residue protein sequence, read N- to C-terminus: tRNA-cytidine(32) 2-sulfurtransferase (311 aa).

Positions 47 to 52 (SGGKDS) match the PP-loop motif motif. [4Fe-4S] cluster-binding residues include cysteine 122, cysteine 125, and cysteine 213.

Belongs to the TtcA family. In terms of assembly, homodimer. It depends on Mg(2+) as a cofactor. The cofactor is [4Fe-4S] cluster.

The protein resides in the cytoplasm. The catalysed reaction is cytidine(32) in tRNA + S-sulfanyl-L-cysteinyl-[cysteine desulfurase] + AH2 + ATP = 2-thiocytidine(32) in tRNA + L-cysteinyl-[cysteine desulfurase] + A + AMP + diphosphate + H(+). The protein operates within tRNA modification. Catalyzes the ATP-dependent 2-thiolation of cytidine in position 32 of tRNA, to form 2-thiocytidine (s(2)C32). The sulfur atoms are provided by the cysteine/cysteine desulfurase (IscS) system. The chain is tRNA-cytidine(32) 2-sulfurtransferase from Escherichia coli O1:K1 / APEC.